Here is a 349-residue protein sequence, read N- to C-terminus: Guanine nucleotide-binding protein-like alpha-10 subunit (349 aa).

The G-alpha domain occupies 33–349; it reads EEIRVLIYGQ…LNITYNSVKN (317 aa). The interval 36–49 is G1 motif; sequence RVLIYGQKKVGVTT. The segment at 168–176 is G2 motif; the sequence is DLNFIKLTQ. Positions 191 to 200 are G3 motif; it reads IKMIEMGIQT. GTP-binding positions include 195 to 199 and 266 to 269; these read EMGIQ and NKKD. Residues 262–269 are G4 motif; that stretch reads IVFFNKKD. Residues 320–325 form a G5 motif region; that stretch reads NEESEV.

This sequence belongs to the G-alpha family.

This chain is Guanine nucleotide-binding protein-like alpha-10 subunit (gpaJ), found in Dictyostelium discoideum (Social amoeba).